Reading from the N-terminus, the 430-residue chain is Enolase (430 aa).

(2R)-2-phosphoglycerate is bound at residue Q163. E205 acts as the Proton donor in catalysis. Mg(2+) is bound by residues D242, E287, and D314. (2R)-2-phosphoglycerate-binding residues include K339, R368, S369, and K390. The active-site Proton acceptor is K339.

This sequence belongs to the enolase family. Mg(2+) serves as cofactor.

The protein localises to the cytoplasm. The protein resides in the secreted. It localises to the cell surface. The enzyme catalyses (2R)-2-phosphoglycerate = phosphoenolpyruvate + H2O. The protein operates within carbohydrate degradation; glycolysis; pyruvate from D-glyceraldehyde 3-phosphate: step 4/5. In terms of biological role, catalyzes the reversible conversion of 2-phosphoglycerate (2-PG) into phosphoenolpyruvate (PEP). It is essential for the degradation of carbohydrates via glycolysis. The protein is Enolase of Bacillus licheniformis (strain ATCC 14580 / DSM 13 / JCM 2505 / CCUG 7422 / NBRC 12200 / NCIMB 9375 / NCTC 10341 / NRRL NRS-1264 / Gibson 46).